Here is a 1910-residue protein sequence, read N- to C-terminus: A disintegrin and metalloproteinase with thrombospondin motifs 20 (1910 aa).

An N-terminal signal peptide occupies residues 1–21 (MWVAKWLTGLLYHLSLFITRS). A propeptide spanning residues 22–253 (WEVDFHPRQE…DERRHSRKKR (232 aa)) is cleaved from the precursor. N-linked (GlcNAc...) asparagine glycosylation is found at N92 and N191. Residues 259 to 467 (RYIEIMVTAD…GYGECLLDKP (209 aa)) form the Peptidase M12B domain. 11 disulfide bridges follow: C334–C387, C363–C369, C381–C462, C419–C446, C489–C511, C500–C521, C506–C540, C534–C545, C568–C605, C572–C610, and C583–C595. A Zn(2+)-binding site is contributed by H403. E404 is a catalytic residue. The Zn(2+) site is built by H407 and H413. Residue N445 is glycosylated (N-linked (GlcNAc...) asparagine). Residues 468–555 (DEEIYNLPSE…VNKETETRPV (88 aa)) form the Disintegrin domain. Residues 556–611 (NGEWGPWEPYSSCSRTCGGGIESATRRCNRPEPRNGGNYCVGRRMKFRSCNTDSCP) enclose the TSP type-1 1 domain. N702, N717, N728, N809, and N870 each carry an N-linked (GlcNAc...) asparagine glycan. A spacer region spans residues 724–846 (TGVFNSSHYG…FNIPLEERSD (123 aa)). TSP type-1 domains follow at residues 846-904 (DMFT…NTDC), 905-961 (ELRW…QELC), 966-1023 (VFTR…FSCP), 1024-1073 (SWAA…SPCE), 1076-1135 (TCAS…TPCS), 1152-1206 (KMAQ…DCFT), 1207-1264 (PCGE…AACP), 1304-1356 (RGNQ…QCGP), 1358-1416 (PCPQ…HACP), 1417-1475 (ADVS…VRCP), 1476-1531 (SWKA…QDCV), 1535-1588 (GMER…NPPC), 1589-1652 (NYIV…INSC), and 1654-1710 (HLAT…NDCK). An N-linked (GlcNAc...) asparagine glycan is attached at N1061. A glycan (N-linked (GlcNAc...) asparagine) is linked at N1456. 2 N-linked (GlcNAc...) asparagine glycosylation sites follow: N1542 and N1572. The region spanning 1711–1910 (SFTTCKEIQV…MTTGLPIQVI (200 aa)) is the GON domain. Residues N1763, N1781, and N1852 are each glycosylated (N-linked (GlcNAc...) asparagine).

Zn(2+) is required as a cofactor. Post-translationally, the precursor is cleaved by a furin endopeptidase. In terms of processing, glycosylated. Can be O-fucosylated by POFUT2 on a serine or a threonine residue found within the consensus sequence C1-X(2)-(S/T)-C2-G of the TSP type-1 repeat domains where C1 and C2 are the first and second cysteine residue of the repeat, respectively. Fucosylated repeats can then be further glycosylated by the addition of a beta-1,3-glucose residue by the glucosyltransferase, B3GALTL. Fucosylation mediates the efficient secretion of ADAMTS family members. Can also be C-glycosylated with one or two mannose molecules on tryptophan residues within the consensus sequence W-X-X-W of the TPRs, and N-glycosylated. These other glycosylations can also facilitate secretion. In terms of tissue distribution, very sparingly expressed, although is detected at low levels in testis, prostate, ovary, heart, placenta, lung and pancreas. Overexpressed in several brain, colon and breast carcinomas.

It is found in the secreted. Its subcellular location is the extracellular space. The protein localises to the extracellular matrix. In terms of biological role, may play a role in tissue-remodeling process occurring in both normal and pathological conditions. May have a protease-independent function in the transport from the endoplasmic reticulum to the Golgi apparatus of secretory cargos, mediated by the GON domain. This chain is A disintegrin and metalloproteinase with thrombospondin motifs 20 (ADAMTS20), found in Homo sapiens (Human).